Here is a 1009-residue protein sequence, read N- to C-terminus: Epstein-Barr nuclear antigen 6 (1009 aa).

Disordered regions lie at residues 1-70, 356-504, 516-646, 663-922, 948-971, and 984-1009; these read MESF…RGWM, TVGE…GACV, VETT…PRPS, QPIQ…DSMA, PLDINATTPKRPRVEESSHGPARC, and DNSEISVFPKDAKQTDYDASTESELD. Basic and acidic residues predominate over residues 12-31; that stretch reads QSPDNERGDNVQTTGEHDQD. The span at 381–391 shows a compositional bias: acidic residues; that stretch reads VELESSDDELP. Over residues 445–461 the composition is skewed to polar residues; it reads AQSTPERPGPSEQSSVT. 2 stretches are compositionally biased toward pro residues: residues 479–495 and 563–574; these read QPPPVPKPVPVKPTPPP and AAGPPAAGPPAA. 2 stretches are compositionally biased toward polar residues: residues 622–641 and 664–679; these read EITQMQQEPSSHLQSATQPT and PIQSSHLSSMSPTQPI. Residues 680 to 689 show a composition bias toward basic and acidic residues; it reads SHEEQPRYED. Composition is skewed to low complexity over residues 710–769 and 776–798; these read APYQ…GYQE and PYQGYQEQPAPQAPYQGYQEPPA. Over residues 862–874 the composition is skewed to polar residues; it reads DQVSQFPHLQSET. Positions 876-898 are enriched in low complexity; it reads PPRLQLSSVPLVSSSAPSWSSPQ. Pro residues predominate over residues 899-916; the sequence is PRAPIRPIPTRFPPPPMP.

It belongs to the herpesviridae EBNA-6 family. As to quaternary structure, interacts with host CTPB1; this interaction leads to gene repression, but also seems to interfere with the repressive function of CtBP pre-bound to DNA, leading to EBNA6 mediated up-regulation of many host genes. Interacts with host MYC; this interaction enhances MYC stability. Interacts (via N-terminus) with host RBPJ. Interacts (via N-terminus) with host histone H2AX; this interaction facilitates H2AX proteasomal degradation. Interacts with host TP73; this interaction inhibits TP73-mediated apoptotic pathway. Interacts (via N-terminus) with host PIM1; this interaction upregulates and stabilizes PIM1 and induces cell proliferation by inhibiting the growth suppressive properties of p21.

The protein resides in the host nucleus. The protein localises to the host nucleus matrix. In terms of biological role, plays an essential role for the activation and immortalization of human B-cells. Represses transcription of viral promoters TP1 and Cp through interaction with host RBPJ, and inhibits EBNA2-mediated activation of these promoters. Targets host chromatin through interactions with host transcription factors, especially RBPJ and IRF4. Alternatively, EBNA6 also regulates the transcription of the EBV oncogene LMP1 in a cell cycle-dependent manner. Modulates the activity of several host proteins involved in cell cycle regulation including host cyclin A, MYC, RB, p21 and p27 mainly through binding to the host SCF(SKP2) complex. Inhibits the promoter of host H2AX and targets H2AX to proteasomal degradation in order to promote latency and cell proliferation. Upregulates host PIM1 expression and stabilization. Potentiates PIM1 to promote cell proliferation by inhibiting the growth suppressive properties of p21. The chain is Epstein-Barr nuclear antigen 6 (EBNA6) from Epstein-Barr virus (strain GD1) (HHV-4).